The following is a 248-amino-acid chain: DNA repair protein RecO (248 aa).

The protein belongs to the RecO family.

Its function is as follows. Involved in DNA repair and RecF pathway recombination. The chain is DNA repair protein RecO from Thermoanaerobacter sp. (strain X514).